A 335-amino-acid chain; its full sequence is Fructose-1,6-bisphosphatase class 1 (335 aa).

Residues Glu92, Asp114, Leu116, and Asp117 each contribute to the Mg(2+) site. Residues 117–120, Asn209, and Lys275 each bind substrate; that span reads DGSS. Residue Glu281 participates in Mg(2+) binding.

This sequence belongs to the FBPase class 1 family. Homotetramer. Requires Mg(2+) as cofactor.

Its subcellular location is the cytoplasm. The catalysed reaction is beta-D-fructose 1,6-bisphosphate + H2O = beta-D-fructose 6-phosphate + phosphate. It functions in the pathway carbohydrate biosynthesis; gluconeogenesis. In Verminephrobacter eiseniae (strain EF01-2), this protein is Fructose-1,6-bisphosphatase class 1.